Here is a 247-residue protein sequence, read N- to C-terminus: 3,4-dihydroxy-2-butanone 4-phosphate synthase (247 aa).

Residues 38 to 39 (RE), Asp-43, 179 to 183 (RMGQT), and Glu-203 contribute to the D-ribulose 5-phosphate site. Residue Glu-39 participates in Mg(2+) binding.

Belongs to the DHBP synthase family. Homodimer. The cofactor is Mg(2+). Mn(2+) is required as a cofactor.

The enzyme catalyses D-ribulose 5-phosphate = (2S)-2-hydroxy-3-oxobutyl phosphate + formate + H(+). The protein operates within cofactor biosynthesis; riboflavin biosynthesis; 2-hydroxy-3-oxobutyl phosphate from D-ribulose 5-phosphate: step 1/1. In terms of biological role, catalyzes the conversion of D-ribulose 5-phosphate to formate and 3,4-dihydroxy-2-butanone 4-phosphate. The chain is 3,4-dihydroxy-2-butanone 4-phosphate synthase from Methanosarcina acetivorans (strain ATCC 35395 / DSM 2834 / JCM 12185 / C2A).